Consider the following 278-residue polypeptide: Probable 3-hydroxybutyryl-CoA dehydrogenase (278 aa).

Belongs to the 3-hydroxyacyl-CoA dehydrogenase family.

It catalyses the reaction (3S)-3-hydroxybutanoyl-CoA + NADP(+) = acetoacetyl-CoA + NADPH + H(+). The protein operates within lipid metabolism; butanoate metabolism. This chain is Probable 3-hydroxybutyryl-CoA dehydrogenase (hbd), found in Deinococcus radiodurans (strain ATCC 13939 / DSM 20539 / JCM 16871 / CCUG 27074 / LMG 4051 / NBRC 15346 / NCIMB 9279 / VKM B-1422 / R1).